Here is a 215-residue protein sequence, read N- to C-terminus: MYEYQEDFIRFALDRGVLRFGRFTLKSGRESPYFFNTGLFNSGTALSKLGRCYVESLVRAQIDFDLVFGPAYKGIPLATAVAMALAETRNRDVPYAFDRKEVKDHGEGGRLVGAPVEGRRAVIVDDVISSGISIREAAELITAEGGTVAAVAIALDRKERGRDEVSAVHEVEQTLGAPVVPIITLDHLETYLADHGGKGDTLDAIRQYRARYGAA.

Lys-26 is a 5-phospho-alpha-D-ribose 1-diphosphate binding site. 34 to 35 (FF) lines the orotate pocket. 5-phospho-alpha-D-ribose 1-diphosphate-binding positions include 72 to 73 (YK), Arg-99, Lys-100, Lys-103, His-105, and 125 to 133 (DDVISSGIS). Residues Ser-129 and Arg-157 each coordinate orotate.

This sequence belongs to the purine/pyrimidine phosphoribosyltransferase family. PyrE subfamily. As to quaternary structure, homodimer. It depends on Mg(2+) as a cofactor.

The catalysed reaction is orotidine 5'-phosphate + diphosphate = orotate + 5-phospho-alpha-D-ribose 1-diphosphate. The protein operates within pyrimidine metabolism; UMP biosynthesis via de novo pathway; UMP from orotate: step 1/2. Catalyzes the transfer of a ribosyl phosphate group from 5-phosphoribose 1-diphosphate to orotate, leading to the formation of orotidine monophosphate (OMP). In Halorhodospira halophila (strain DSM 244 / SL1) (Ectothiorhodospira halophila (strain DSM 244 / SL1)), this protein is Orotate phosphoribosyltransferase.